A 382-amino-acid chain; its full sequence is Two-component response regulator ARR14 (382 aa).

Positions 12–128 constitute a Response regulatory domain; it reads RILVVDDDTS…ELKNIWQHVV (117 aa). At Asp63 the chain carries 4-aspartylphosphate. Positions 171 to 181 are enriched in basic residues; it reads CRNKKKKKKRS. Residues 171–193 are disordered; it reads CRNKKKKKKRSVDRDDNEDDLLL. Residues 199–202 carry the Nuclear localization signal motif; that stretch reads KKSR. A DNA-binding region (myb-like GARP) is located at residues 202–252; sequence RVVWSIELHQQFVNAVNKLGIDKAVPKRILELMNVPGLSRENVASHLQKFR.

The protein belongs to the ARR family. Type-B subfamily. In terms of assembly, binds the target DNA as a monomer. Two-component system major event consists of a His-to-Asp phosphorelay between a sensor histidine kinase (HK) and a response regulator (RR). In plants, the His-to-Asp phosphorelay involves an additional intermediate named Histidine-containing phosphotransfer protein (HPt). This multistep phosphorelay consists of a His-Asp-His-Asp sequential transfer of a phosphate group between first a His and an Asp of the HK protein, followed by the transfer to a conserved His of the HPt protein and finally the transfer to an Asp in the receiver domain of the RR protein. As to expression, predominantly expressed in young leaf tissue.

The protein localises to the nucleus. Transcriptional activator that binds specifically to the DNA sequence 5'-[AG]GATT-3'. Functions as a response regulator involved in His-to-Asp phosphorelay signal transduction system. Phosphorylation of the Asp residue in the receiver domain activates the ability of the protein to promote the transcription of target genes. Could directly activate some type-A response regulators in response to cytokinins. The chain is Two-component response regulator ARR14 (ARR14) from Arabidopsis thaliana (Mouse-ear cress).